The sequence spans 648 residues: cAMP-dependent protein kinase catalytic subunit (648 aa).

Composition is skewed to low complexity over residues 1–20 (MSNS…TINN), 46–67 (SGNN…NSSG), 136–175 (QQQP…PQQQ), and 232–254 (NTPS…NPHT). Disordered stretches follow at residues 1–25 (MSNS…KVNV), 40–86 (GGGG…TKMD), 121–175 (KVPS…PQQQ), and 219–290 (QQQQ…DTNP). Over residues 255 to 290 (SGLSLQHAHSSYTPSNVLHSPTHFQSSLPTRLDTNP) the composition is skewed to polar residues. In terms of domain architecture, Protein kinase spans 336 to 590 (FKQIRVIGTG…ALDVKNHRWF (255 aa)). Residues 342–350 (IGTGTFGKV) and lysine 365 each bind ATP. Catalysis depends on aspartate 459, which acts as the Proton acceptor. The residue at position 490 (threonine 490) is a Phosphothreonine. The 58-residue stretch at 591-648 (SDINWERLYQRRDNGPFIPKIQHQGDSSNFEMYDEEEMVEEPPSSNYVDPYAHLFKDF) folds into the AGC-kinase C-terminal domain.

This sequence belongs to the protein kinase superfamily. AGC Ser/Thr protein kinase family. cAMP subfamily. In Dictyostelium the holoenzyme is a dimer composed of a regulatory (R) and a catalytic (C) subunit. In the presence of cAMP it dissociates into the active C subunit and an R monomer.

It carries out the reaction L-seryl-[protein] + ATP = O-phospho-L-seryl-[protein] + ADP + H(+). It catalyses the reaction L-threonyl-[protein] + ATP = O-phospho-L-threonyl-[protein] + ADP + H(+). In terms of biological role, essential for differentiation and fruit morphogenesis. This Dictyostelium discoideum (Social amoeba) protein is cAMP-dependent protein kinase catalytic subunit (pkaC).